Consider the following 418-residue polypeptide: Oxalate:formate antiporter (418 aa).

Transmembrane regions (helical) follow at residues 17–37 (WFYLVLAVLLMCMISGVQYSW), 48–68 (LGVSLAAVQTAFTLSQVIQAG), 84–104 (IPLMFGGAMVLAGWTFMGMVD), 108–128 (ALYALYTLAGAGVGIVYGIAM), 141–161 (LASGFTAAGYGLGVLPFLPLI), 172–192 (AAFMYTGLIMGILIILIAFVI), 222–242 (FWVLWTAFFSVNFGGLLLVAN), 250–270 (LGLAAGVLTIGVSIQNLFNGG), 288–308 (MSVVFGINAVVLALFPTIAAL), 311–331 (VAFIAMLAIAFFTWGGSYALF), 350–370 (FFWAAKATASIFGGGLGAAIA), and 378–398 (AFLITAITSFIAFALATFVIP). Lys-355 provides a ligand contact to oxalate.

This sequence belongs to the major facilitator superfamily. OFA (TC 2.A.1.11) family. In terms of assembly, monomer.

Its subcellular location is the cell inner membrane. Functionally, anion transporter that carries out the exchange of divalent oxalate with monovalent formate, the product of oxalate decarboxylation, at the plasma membrane, and in doing so catalyzes the vectorial portion of a proton-motive metabolic cycle that drives ATP synthesis. This Oxalobacter formigenes protein is Oxalate:formate antiporter (oxlT).